A 294-amino-acid polypeptide reads, in one-letter code: uncharacterized protein (294 aa).

Residues 1-18 (MKKLLLIITVFFTCSAVA) form the signal peptide.

This is an uncharacterized protein from Rickettsia bellii (strain RML369-C).